We begin with the raw amino-acid sequence, 225 residues long: uncharacterized protein (225 aa).

The region spanning leucine 166–isoleucine 214 is the PCI domain.

This is an uncharacterized protein from Methanocaldococcus jannaschii (strain ATCC 43067 / DSM 2661 / JAL-1 / JCM 10045 / NBRC 100440) (Methanococcus jannaschii).